Here is a 126-residue protein sequence, read N- to C-terminus: SH2 domain-containing protein 1A (126 aa).

The SH2 domain maps to Val6–Val102. Residues Glu67–Gln92 form an interaction with FYN SH3 domain region. The residue at position 89 (Lys89) is an N6-acetyllysine. The segment at Tyr100 to Pro126 is disordered. Positions Gly115 to Pro126 are enriched in basic and acidic residues. At Ser119 the chain carries Phosphoserine.

In terms of assembly, interacts with CD84, CD244, LY9, SLAMF1 and FYN. Interacts with NTRK1, NTRK2 and NTRK3.

It localises to the cytoplasm. Functionally, cytoplasmic adapter regulating receptors of the signaling lymphocytic activation molecule (SLAM) family such as SLAMF1, CD244, LY9, CD84, SLAMF6 and SLAMF7. In SLAM signaling seems to cooperate with SH2D1B/EAT-2. Initially it has been proposed that association with SLAMF1 prevents SLAMF1 binding to inhibitory effectors including INPP5D/SHIP1 and PTPN11/SHP-2. However, by simultaneous interactions, recruits FYN which subsequently phosphorylates and activates SLAMF1. Positively regulates CD244/2B4- and CD84-mediated natural killer (NK) cell functions. Can also promote CD48-, SLAMF6 -, LY9-, and SLAMF7-mediated NK cell activation. In the context of NK cell-mediated cytotoxicity enhances conjugate formation with target cells. May also regulate the activity of the neurotrophin receptors NTRK1, NTRK2 and NTRK3. This Rattus norvegicus (Rat) protein is SH2 domain-containing protein 1A (Sh2d1a).